Consider the following 290-residue polypeptide: 4-hydroxybenzoate octaprenyltransferase (290 aa).

Transmembrane regions (helical) follow at residues 24–44 (IGFF…HKGI), 48–68 (VVLI…CIIN), 98–118 (LVAL…LNFI), 142–162 (FPQV…FTAI), 171–191 (WLLF…YAMI), 214–234 (FLIG…GWKE), 239–259 (VFYF…QILI), and 270–290 (AFLS…SSFH).

Belongs to the UbiA prenyltransferase family. Mg(2+) serves as cofactor.

It is found in the cell inner membrane. It carries out the reaction all-trans-octaprenyl diphosphate + 4-hydroxybenzoate = 4-hydroxy-3-(all-trans-octaprenyl)benzoate + diphosphate. Its pathway is cofactor biosynthesis; ubiquinone biosynthesis. Its function is as follows. Catalyzes the prenylation of para-hydroxybenzoate (PHB) with an all-trans polyprenyl group. Mediates the second step in the final reaction sequence of ubiquinone-8 (UQ-8) biosynthesis, which is the condensation of the polyisoprenoid side chain with PHB, generating the first membrane-bound Q intermediate 3-octaprenyl-4-hydroxybenzoate. This is 4-hydroxybenzoate octaprenyltransferase from Blochmanniella pennsylvanica (strain BPEN).